The chain runs to 201 residues: Protein ripply1 (201 aa).

Residues 1 to 29 (MDPAASPAAAPPAAPAAAPAADPAADPAA) form a disordered region. Over residues 15–29 (PAAAPAADPAADPAA) the composition is skewed to low complexity. Positions 57–60 (AYLW) match the WRPW motif motif. Residues 99-134 (HPVRLYWPKSHSFDYLYSAGEILLNNFPVQATINLY) are ripply homology domain. The segment covering 136–174 (DSDSADNEEDKEEEEEEEEEEDDEEEEEDEDKDVNENEP) has biased composition (acidic residues). Residues 136–201 (DSDSADNEED…SPDPHSACPN (66 aa)) are disordered.

Belongs to the ripply family. In terms of tissue distribution, expressed in the anterior presomitic mesoderm and somites of stage E9.5 dpc embryos. Also expressed in tongue, diaphragm and intercostal muscles at 16.5 dpc.

It is found in the nucleus. In terms of biological role, plays a role in somitogenesis. Essential for transcriptional repression of the segmental patterning genes, thus terminating the segmentation program in the presomitic mesoderm, and also required for the maintenance of rostrocaudal polarity in somites. This is Protein ripply1 from Mus musculus (Mouse).